We begin with the raw amino-acid sequence, 141 residues long: General odorant-binding protein 57b (141 aa).

An N-terminal signal peptide occupies residues 1–22 (MFIYRLVFIAPLILLLFSLAKA). Intrachain disulfides connect Cys-39–Cys-77, Cys-73–Cys-120, and Cys-111–Cys-129.

Belongs to the PBP/GOBP family.

Functionally, present in the aqueous fluid surrounding olfactory sensory dendrites and are thought to aid in the capture and transport of hydrophobic odorants into and through this fluid. The polypeptide is General odorant-binding protein 57b (Drosophila melanogaster (Fruit fly)).